Consider the following 906-residue polypeptide: Protein kintoun (906 aa).

At serine 376 the chain carries Phosphoserine. Disordered regions lie at residues 614–691 and 793–906; these read QQQK…RKQR and RKKN…DEDM. Residues 618 to 631 are compositionally biased toward basic residues; that stretch reads KLNKKQRKRNKKQR. Residues 639-655 are compositionally biased toward basic and acidic residues; sequence EELKAAQEELQLQHEKQ. Over residues 793-808 the composition is skewed to basic residues; sequence RKKNQKRRDCKLRAQQ. At serine 812 the chain carries Phosphoserine. Polar residues predominate over residues 837–850; it reads ANAQYFKQPNNNNG. 2 stretches are compositionally biased toward basic and acidic residues: residues 851-865 and 875-887; these read HDQD…HDSG and NNEE…EADA. Residues 894-906 are compositionally biased toward acidic residues; it reads EMDDDDEDEDEDM.

The protein belongs to the PIH1 family. Kintoun subfamily. In terms of assembly, interacts with Pp1alpha-96A, Pp1-87B, Pp1-13C and flw.

It is found in the cytoplasm. Required for cytoplasmic pre-assembly of axonemal dyneins, thereby playing a central role in motility in cilia and flagella. Involved in pre-assembly of dynein arm complexes in the cytoplasm before intraflagellar transport loads them for the ciliary compartment. The sequence is that of Protein kintoun from Drosophila virilis (Fruit fly).